The primary structure comprises 471 residues: Sulfate adenylyltransferase subunit 1 (471 aa).

The 218-residue stretch at 22–239 (KDMLRFLTCG…NIEIGEDDNL (218 aa)) folds into the tr-type G domain. Residues 31-38 (GSVDDGKS) form a G1 region. 31–38 (GSVDDGKS) provides a ligand contact to GTP. The interval 89 to 93 (GITID) is G2. Positions 110–113 (DTPG) are G3. Residues 110–114 (DTPGH) and 165–168 (NKMD) contribute to the GTP site. The segment at 165-168 (NKMD) is G4. A G5 region spans residues 202 to 204 (SAL).

The protein belongs to the TRAFAC class translation factor GTPase superfamily. Classic translation factor GTPase family. CysN/NodQ subfamily. Heterodimer composed of CysD, the smaller subunit, and CysN.

The catalysed reaction is sulfate + ATP + H(+) = adenosine 5'-phosphosulfate + diphosphate. It participates in sulfur metabolism; hydrogen sulfide biosynthesis; sulfite from sulfate: step 1/3. With CysD forms the ATP sulfurylase (ATPS) that catalyzes the adenylation of sulfate producing adenosine 5'-phosphosulfate (APS) and diphosphate, the first enzymatic step in sulfur assimilation pathway. APS synthesis involves the formation of a high-energy phosphoric-sulfuric acid anhydride bond driven by GTP hydrolysis by CysN coupled to ATP hydrolysis by CysD. The polypeptide is Sulfate adenylyltransferase subunit 1 (Alteromonas mediterranea (strain DSM 17117 / CIP 110805 / LMG 28347 / Deep ecotype)).